Reading from the N-terminus, the 211-residue chain is Large ribosomal subunit protein uL3 (211 aa).

The residue at position 150 (Gln150) is an N5-methylglutamine.

This sequence belongs to the universal ribosomal protein uL3 family. Part of the 50S ribosomal subunit. Forms a cluster with proteins L14 and L19. Methylated by PrmB.

Its function is as follows. One of the primary rRNA binding proteins, it binds directly near the 3'-end of the 23S rRNA, where it nucleates assembly of the 50S subunit. This chain is Large ribosomal subunit protein uL3, found in Pseudomonas entomophila (strain L48).